We begin with the raw amino-acid sequence, 293 residues long: MATPDQDVRNRKINPEARMELKEHLREFRDRLIKAAIATIIAAIIGTVFLYQPFIEMISAPLQQINIETGRRANLNYGSVASPFDQLLKVGMYIGLVIASPVWLYQALRFLLPALHTKEKKYLFGFLTASIFAFACGVAISYFTLPGVVYALLKFTPVNESNYIDAGVYISFILKFVVTFSCAFIIPVILVGINMLGLIRGKTILKSWRWVVVLVAVIAALTAPGSDIMMMFVLMAPLLIFFFAAIGICMINDKRRDRKLAKLAQGSDEASLNTATSSEDLAKMGYFEEEKTS.

A run of 6 helical transmembrane segments spans residues 35-55, 87-107, 123-143, 173-193, 204-224, and 228-248; these read AAIA…QPFI, LLKV…LYQA, LFGF…ISYF, ILKF…LVGI, ILKS…LTAP, and IMMM…AIGI.

Belongs to the TatC family. In terms of assembly, the Tat system comprises two distinct complexes: a TatABC complex, containing multiple copies of TatA, TatB and TatC subunits, and a separate TatA complex, containing only TatA subunits. Substrates initially bind to the TatABC complex, which probably triggers association of the separate TatA complex to form the active translocon.

The protein localises to the cell membrane. In terms of biological role, part of the twin-arginine translocation (Tat) system that transports large folded proteins containing a characteristic twin-arginine motif in their signal peptide across membranes. Together with TatB, TatC is part of a receptor directly interacting with Tat signal peptides. In Rothia mucilaginosa (strain DY-18) (Stomatococcus mucilaginosus), this protein is Sec-independent protein translocase protein TatC.